A 184-amino-acid chain; its full sequence is NADH-quinone oxidoreductase subunit B (184 aa).

Residues Cys37, Cys38, Cys103, and Cys132 each contribute to the [4Fe-4S] cluster site.

It belongs to the complex I 20 kDa subunit family. NDH-1 is composed of 14 different subunits. Subunits NuoB, C, D, E, F, and G constitute the peripheral sector of the complex. Requires [4Fe-4S] cluster as cofactor.

The protein localises to the cell membrane. The catalysed reaction is a quinone + NADH + 5 H(+)(in) = a quinol + NAD(+) + 4 H(+)(out). Functionally, NDH-1 shuttles electrons from NADH, via FMN and iron-sulfur (Fe-S) centers, to quinones in the respiratory chain. The immediate electron acceptor for the enzyme in this species is believed to be a menaquinone. Couples the redox reaction to proton translocation (for every two electrons transferred, four hydrogen ions are translocated across the cytoplasmic membrane), and thus conserves the redox energy in a proton gradient. This chain is NADH-quinone oxidoreductase subunit B, found in Nocardioides sp. (strain ATCC BAA-499 / JS614).